The sequence spans 256 residues: Trypsin, alkaline B (256 aa).

An N-terminal signal peptide occupies residues 1–17; it reads MRLFLALLALGFAAVAA. The propeptide at 18–24 is activation peptide; it reads VPANPQR. The Peptidase S1 domain maps to 25–256; sequence IVGGSTTTIQ…RFANWIRNNS (232 aa). Cys-55 and Cys-71 are oxidised to a cystine. Active-site charge relay system residues include His-70 and Asp-115. Cystine bridges form between Cys-180-Cys-197 and Cys-209-Cys-233. The active-site Charge relay system is the Ser-213.

Belongs to the peptidase S1 family. In terms of tissue distribution, midgut.

The protein localises to the secreted. It is found in the extracellular space. It carries out the reaction Preferential cleavage: Arg-|-Xaa, Lys-|-Xaa.. This Manduca sexta (Tobacco hawkmoth) protein is Trypsin, alkaline B.